A 200-amino-acid chain; its full sequence is NAD(P)H dehydrogenase (quinone) (200 aa).

The region spanning 4–191 (VLVLYYSSYG…DIARYQGKHV (188 aa)) is the Flavodoxin-like domain. FMN is bound by residues 10–15 (SSYGHV) and 79–81 (TRF). Tyr12 contributes to the NAD(+) binding site. A substrate-binding site is contributed by Trp99. Residues 114–120 (STGTQHG) and His135 contribute to the FMN site.

This sequence belongs to the WrbA family. FMN is required as a cofactor.

It catalyses the reaction a quinone + NADH + H(+) = a quinol + NAD(+). The enzyme catalyses a quinone + NADPH + H(+) = a quinol + NADP(+). The chain is NAD(P)H dehydrogenase (quinone) from Burkholderia orbicola (strain MC0-3).